Here is a 178-residue protein sequence, read N- to C-terminus: Conodipine-P3 (178 aa).

A signal peptide spans 1-24 (MKLLAPVLWAMAALGVTWLVAVDS). Pro-38 bears the 4-hydroxyproline mark. Residues Pro-42 and Pro-49 each carry the 4-hydroxyproline; partial modification. Residue His-54 is part of the active site. The propeptide at 98–130 (KREVTSHRATSIAHSRLWKTALDQKSFLNRKAR) is interchain peptide. Position 131 is a pyrrolidone carboxylic acid (Gln-131). Residue Pro-137 is modified to 4-hydroxyproline; partial.

The protein belongs to the phospholipase A2 family. Group IX subfamily. As to quaternary structure, heterodimer of an alpha and a beta chain; probably disulfide-linked. It depends on Ca(2+) as a cofactor. In terms of tissue distribution, expressed by the venom duct.

It is found in the secreted. It catalyses the reaction a 1,2-diacyl-sn-glycero-3-phosphocholine + H2O = a 1-acyl-sn-glycero-3-phosphocholine + a fatty acid + H(+). Functionally, catalyzes the calcium-dependent hydrolysis of the 2-acyl groups in 3-sn-phosphoglycerides. The chain is Conodipine-P3 from Conus purpurascens (Purple cone).